The following is a 202-amino-acid chain: Nucleoside triphosphate pyrophosphatase (202 aa).

Catalysis depends on Asp-79, which acts as the Proton acceptor.

It belongs to the Maf family. It depends on a divalent metal cation as a cofactor.

The protein resides in the cytoplasm. It catalyses the reaction a ribonucleoside 5'-triphosphate + H2O = a ribonucleoside 5'-phosphate + diphosphate + H(+). The enzyme catalyses a 2'-deoxyribonucleoside 5'-triphosphate + H2O = a 2'-deoxyribonucleoside 5'-phosphate + diphosphate + H(+). Nucleoside triphosphate pyrophosphatase. May have a dual role in cell division arrest and in preventing the incorporation of modified nucleotides into cellular nucleic acids. This chain is Nucleoside triphosphate pyrophosphatase, found in Nitrobacter hamburgensis (strain DSM 10229 / NCIMB 13809 / X14).